Here is a 5125-residue protein sequence, read N- to C-terminus: Usherin (5125 aa).

An N-terminal signal peptide occupies residues M1–G33. N120, N229, N257, N273, N414, N447, and N468 each carry an N-linked (GlcNAc...) asparagine glycan. Positions N273–R513 constitute a Laminin N-terminal domain. 39 disulfides stabilise this stretch: C514-C523, C516-C532, C534-C545, C548-C568, C571-C580, C573-C601, C604-C613, C616-C634, C637-C651, C639-C658, C660-C669, C672-C687, C690-C704, C692-C711, C713-C722, C725-C740, C743-C755, C745-C762, C764-C773, C776-C788, C791-C804, C793-C811, C813-C822, C825-C840, C843-C857, C845-C864, C866-C875, C878-C893, C896-C909, C898-C916, C918-C927, C930-C944, C947-C959, C949-C966, C981-C995, C998-C1010, C1000-C1017, C1019-C1028, and C1031-C1046. 10 consecutive Laminin EGF-like domains span residues C514–P570, C571–H636, C637–P689, C690–P742, C743–V790, C791–P842, C843–A895, C896–P946, C947–P997, and C998–K1048. N-linked (GlcNAc...) asparagine glycosylation occurs at N646. Residues N835 and N852 are each glycosylated (N-linked (GlcNAc...) asparagine). Residue N884 is glycosylated (N-linked (GlcNAc...) asparagine). N940 carries N-linked (GlcNAc...) asparagine glycosylation. An N-linked (GlcNAc...) asparagine glycan is attached at N1007. Fibronectin type-III domains lie at P1054–E1142, G1146–Q1240, R1241–V1356, and F1357–A1461. N-linked (GlcNAc...) asparagine glycans are attached at residues N1067, N1149, N1170, N1221, N1304, and N1381. 2 consecutive Laminin G-like domains span residues T1510–C1697 and E1702–C1879. Intrachain disulfides connect C1660-C1697 and C1850-C1879. Fibronectin type-III domains follow at residues T1857 to H1943, V1945 to E2042, A2043 to E2132, R2133 to E2230, G2231 to E2318, G2319 to G2421, G2425 to D2519, K2520 to G2613, I2614 to S2709, G2713 to A2806, L2807 to G2910, R2914 to E3005, G3009 to G3099, A3380 to D3485, V3486 to V3577, S3580 to Q3670, V3672 to D3762, P3765 to A3852, A3853 to A3950, P3951 to S4054, G4055 to D4143, S4144 to D4251, G4252 to A4344, G4345 to E4432, D4433 to S4517, A4518 to L4620, P4625 to A4720, P4721 to A4813, and P4814 to E4916. The tract at residues S1930–R1950 is disordered.

In terms of assembly, interacts with collagen IV and fibronectin via its laminin EGF-like domains. Interaction with collagen may be required for stable integration into the basement membrane. Interacts with NINL. Interacts with USH1C. Interacts (via the cytoplasmic region) with PDZD7. Component of USH2 complex, composed of ADGRV1, PDZD7, USH2A and WHRN. Interacts with ADGRV1/MASS1 (via N-terminal PDZ domain). Interacts (via the cytoplasmic region) with WHRN. Interacts (via the cytoplasmic region) with VEZT and MYO7A (via MyTH4-FERM domains); the interaction associates VEZT with the USH2 complex at the stereocilia base. Present in the synaptic terminals of inner ear hair cells (at protein level). Predominantly expressed in the retina and cochlea. Weakly expressed in brain and kidney. Detectable from E17 in the neural epithelium, but not in the retinal pigment epithelium (RPE) of the developing retina. After birth, it is expressed at P7 and remains expressed during adulthood.

The protein localises to the secreted. It is found in the cell projection. It localises to the stereocilium membrane. The protein resides in the photoreceptor inner segment. Involved in hearing and vision as member of the USH2 complex. In the inner ear, required for the hair bundle ankle formation, which connects growing stereocilia in developing cochlear hair cells. In retina photoreceptors, the USH2 complex is required for the maintenance of periciliary membrane complex that seems to play a role in regulating intracellular protein transport. The protein is Usherin (Ush2a) of Rattus norvegicus (Rat).